The following is a 366-amino-acid chain: Aliphatic nitrilase (366 aa).

Residues 8–282 (FKVAAVQAQP…EGILYADIDL (275 aa)) form the CN hydrolase domain. Glu-48 acts as the Proton acceptor in catalysis. Lys-131 functions as the Proton donor in the catalytic mechanism. The active-site Nucleophile is Cys-165. The disordered stretch occupies residues 346-366 (DEQRALPSTHSDETDRATASI). Residues 355–366 (HSDETDRATASI) are compositionally biased toward basic and acidic residues.

It belongs to the carbon-nitrogen hydrolase superfamily. Nitrilase family. In terms of assembly, homodimer.

It catalyses the reaction an aliphatic nitrile + 2 H2O = a carboxylate + NH4(+). The protein is Aliphatic nitrilase (nitA) of Rhodococcus rhodochrous.